The sequence spans 150 residues: Large ribosomal subunit protein bL9 (150 aa).

It belongs to the bacterial ribosomal protein bL9 family.

Its function is as follows. Binds to the 23S rRNA. This is Large ribosomal subunit protein bL9 from Shewanella baltica (strain OS155 / ATCC BAA-1091).